Reading from the N-terminus, the 192-residue chain is Phosphoheptose isomerase (192 aa).

Positions 35–192 (LIETLENQGK…CIERHFANKN (158 aa)) constitute an SIS domain. 50–52 (NGG) lines the substrate pocket. Zn(2+) is bound by residues histidine 59 and glutamate 63. Substrate contacts are provided by residues glutamate 63, 92–93 (ND), 118–120 (STS), serine 123, and glutamine 170. Residues glutamine 170 and histidine 178 each contribute to the Zn(2+) site.

The protein belongs to the SIS family. GmhA subfamily. In terms of assembly, homotetramer. The cofactor is Zn(2+).

The protein resides in the cytoplasm. It catalyses the reaction 2 D-sedoheptulose 7-phosphate = D-glycero-alpha-D-manno-heptose 7-phosphate + D-glycero-beta-D-manno-heptose 7-phosphate. The protein operates within carbohydrate biosynthesis; D-glycero-D-manno-heptose 7-phosphate biosynthesis; D-glycero-alpha-D-manno-heptose 7-phosphate and D-glycero-beta-D-manno-heptose 7-phosphate from sedoheptulose 7-phosphate: step 1/1. Functionally, catalyzes the isomerization of sedoheptulose 7-phosphate in D-glycero-D-manno-heptose 7-phosphate. The protein is Phosphoheptose isomerase of Helicobacter pylori (strain Shi470).